The sequence spans 338 residues: Heat-inducible transcription repressor HrcA (338 aa).

This sequence belongs to the HrcA family.

In terms of biological role, negative regulator of class I heat shock genes (grpE-dnaK-dnaJ and groELS operons). Prevents heat-shock induction of these operons. The sequence is that of Heat-inducible transcription repressor HrcA from Thermotoga sp. (strain RQ2).